The chain runs to 122 residues: MKLRPLYDKIVVERLEEKEEKTPSGIIIPDTAKEKPQLGKVVAVGPGKLLDNGELKPLSVKEGDVVLFNKYAGNEVEIEGKIYLVMSEDEVLAVVEDYSSLIGGEVRWQQRQLSTTRKQGQN.

The protein belongs to the GroES chaperonin family. As to quaternary structure, heptamer of 7 subunits arranged in a ring. Interacts with the chaperonin GroEL.

Its subcellular location is the cytoplasm. Together with the chaperonin GroEL, plays an essential role in assisting protein folding. The GroEL-GroES system forms a nano-cage that allows encapsulation of the non-native substrate proteins and provides a physical environment optimized to promote and accelerate protein folding. GroES binds to the apical surface of the GroEL ring, thereby capping the opening of the GroEL channel. The protein is Co-chaperonin GroES of Aquifex aeolicus (strain VF5).